The following is a 315-amino-acid chain: Thioredoxin reductase (315 aa).

FAD is bound at residue 34–41 (EGMKVGGQ). A disulfide bond links cysteine 134 and cysteine 137. 282 to 291 (DIRVKSLRQV) contributes to the FAD binding site.

This sequence belongs to the class-II pyridine nucleotide-disulfide oxidoreductase family. In terms of assembly, homodimer. It depends on FAD as a cofactor.

The protein resides in the cytoplasm. The enzyme catalyses [thioredoxin]-dithiol + NADP(+) = [thioredoxin]-disulfide + NADPH + H(+). The protein is Thioredoxin reductase (trxB) of Peptoclostridium litorale (Clostridium litorale).